The sequence spans 443 residues: Xaa-Pro dipeptidase (443 aa).

Residues Asp-244, Asp-255, His-336, Glu-381, and Glu-420 each contribute to the Mn(2+) site.

It belongs to the peptidase M24B family. Bacterial-type prolidase subfamily. The cofactor is Mn(2+).

The catalysed reaction is Xaa-L-Pro dipeptide + H2O = an L-alpha-amino acid + L-proline. Splits dipeptides with a prolyl residue in the C-terminal position. The sequence is that of Xaa-Pro dipeptidase from Stenotrophomonas maltophilia (strain R551-3).